Consider the following 543-residue polypeptide: RuBisCO large subunit-binding protein subunit alpha, chloroplastic (543 aa).

Residues 1 to 2 constitute a chloroplast transit peptide; it reads GA.

The protein belongs to the chaperonin (HSP60) family. Oligomer of probably six alpha and six beta subunits.

It is found in the plastid. The protein resides in the chloroplast. Its function is as follows. This protein binds RuBisCO small and large subunits and is implicated in the assembly of the enzyme oligomer. The protein is RuBisCO large subunit-binding protein subunit alpha, chloroplastic of Triticum aestivum (Wheat).